The chain runs to 603 residues: Podocalyxin-like protein 2 (603 aa).

A signal peptide spans 1–28; it reads MARPLRAARLPPPLLLLLAAGASLGAYA. Topologically, residues 29-499 are extracellular; that stretch reads VGVDEPGPEG…ATQVRSDYGT (471 aa). A disordered region spans residues 53–92; the sequence is FEPLDSEEPSEAMGLDAGLAPGSGFPSEDSEESRLLQPPQ. Ser75 is a glycosylation site (O-linked (Xyl...) (chondroitin sulfate) serine). Tyr93 is subject to Sulfotyrosine. Asn101 carries an N-linked (GlcNAc...) asparagine glycan. Tyr113 is modified (sulfotyrosine). A disordered region spans residues 124 to 368; the sequence is SMEDPGQAPD…LEGQAAEAHS (245 aa). The segment covering 156–187 has biased composition (acidic residues); the sequence is QEEEEEEEEEEEEREEEEREKEAEEEEEEEEL. Low complexity predominate over residues 196 to 216; the sequence is ATAQAHAPSPSTSSSTSSQSP. 3 stretches are compositionally biased toward polar residues: residues 240–266, 302–314, and 339–349; these read VKPT…QESG, ALPS…TVPP, and DTESTPSSATW. An N-linked (GlcNAc...) asparagine glycan is attached at Asn260. Residue Asn394 is glycosylated (N-linked (GlcNAc...) asparagine). Residues 500 to 520 form a helical membrane-spanning segment; it reads LFVVLVIIGVICFIIIVLGLL. Topologically, residues 521-603 are cytoplasmic; sequence YNCWQRRMPK…SDVFEEDTHL (83 aa). Residues 558-570 show a composition bias toward polar residues; sequence DSQSEMQEKQPSL. Positions 558–603 are disordered; it reads DSQSEMQEKQPSLNGGAINGPSSWSALMGSKRDPEDSDVFEEDTHL. Phosphoserine is present on residues Ser569 and Ser594. The span at 592 to 603 shows a compositional bias: acidic residues; the sequence is EDSDVFEEDTHL.

This sequence belongs to the podocalyxin family. As to quaternary structure, homodimer; disulfide-linked. Interacts with SELL, SELE and SELP. Glycosylated; contains chondroitin sulfate. Displays sialylated O-linked oligosaccharides. Post-translationally, sulfation is necessary for interaction with SELL. Sialylated O-linked oligosaccharides are necessary for interaction with SELL, SELE and SELP.

It is found in the membrane. In terms of biological role, acts as a ligand for vascular selectins. Mediates rapid rolling of leukocytes over vascular surfaces through high affinity divalent cation-dependent interactions with E-, P- and L-selectins. The chain is Podocalyxin-like protein 2 (Podxl2) from Mus musculus (Mouse).